The chain runs to 1032 residues: FACT complex subunit ctc-2 (1032 aa).

The disordered stretch occupies residues 446–513 (DEEEAQPTPK…QKEGLAKYAE (68 aa)). Positions 476 to 508 (LRSERNTTVDEDADKRRREHQKELAQKKQKEGL) are enriched in basic and acidic residues. 4 coiled-coil regions span residues 485–506 (DEDADKRRREHQKELAQKKQKE), 624–658 (DRYADIANQISNLKRDAVKKEQEKKDMEDVVEQDK), 785–805 (RRRRAELDRLFKSFAEKIAEA), and 949–1010 (EVEE…RKAK). Positions 943 to 1032 (NDSDDDEVEE…ERAAPKKRRK (90 aa)) are disordered. Acidic residues-rich tracts occupy residues 944–979 (DSDDDEVEEEEEESAFEIDESELEDASESSEEDSEY) and 986–1004 (EASDEAEDSEEEEGEDWDE).

It belongs to the peptidase M24 family. SPT16 subfamily. In terms of assembly, forms a stable heterodimer with ctc-1/pob3. The dimer of ctc-1 and ctc-2 weakly associates with multiple molecules of nhp-1/nhp6 to form the FACT complex.

It localises to the nucleus. The protein localises to the chromosome. Functionally, component of the FACT complex, a general chromatin factor that acts to reorganize nucleosomes. The FACT complex is involved in multiple processes that require DNA as a template such as mRNA elongation, DNA replication and DNA repair. During transcription elongation the FACT complex acts as a histone chaperone that both destabilizes and restores nucleosomal structure. It facilitates the passage of RNA polymerase II and transcription by promoting the dissociation of one histone H2A-H2B dimer from the nucleosome, then subsequently promotes the reestablishment of the nucleosome following the passage of RNA polymerase II. In Neurospora crassa (strain ATCC 24698 / 74-OR23-1A / CBS 708.71 / DSM 1257 / FGSC 987), this protein is FACT complex subunit ctc-2 (ctc-2).